The following is a 32-amino-acid chain: Cyclotide glopa A (32 aa).

The segment at residues 1–32 is a cross-link (cyclopeptide (Gly-Asn)); that stretch reads GGSIPCIETCVWTGCFLVPGCSCKSDKKCYLN. 3 cysteine pairs are disulfide-bonded: cysteine 6–cysteine 21, cysteine 10–cysteine 23, and cysteine 15–cysteine 29.

Post-translationally, this is a cyclic peptide.

Its function is as follows. Probably participates in a plant defense mechanism. The protein is Cyclotide glopa A of Gloeospermum pauciflorum.